A 193-amino-acid polypeptide reads, in one-letter code: MLGVVELLLLGAAWLAGPARGQNETEPIVLEGKCLVVCDSNPTSDPTGTALGISVRSGSAKVAFSAIRSTNHEPSEMSNRTMIIYFDQVLVNIGNNFDSERSTFIAPRKGIYSFNFHVVKVYNRQTIQVSLMLNGWPVISAFAGDQDVTREAASNGVLIQMEKGDRAYLKLERGNLMGGWKYSTFSGFLVFPL.

The N-terminal stretch at 1-21 is a signal peptide; sequence MLGVVELLLLGAAWLAGPARG. N23 carries N-linked (GlcNAc...) asparagine glycosylation. Residues 34–38 are essential for interaction with NRXN1 and linker of two C1q trimers into disulfide-linked hexamers; that stretch reads CLVVC. In terms of domain architecture, C1q spans 57–193; sequence SGSAKVAFSA…TFSGFLVFPL (137 aa). A necessary for interaction with CBLN3, and homotrimerization region spans residues 62–193; it reads VAFSAIRSTN…TFSGFLVFPL (132 aa). Residue N79 is glycosylated (N-linked (GlcNAc...) asparagine). The segment at 122-147 is essential for interaction with GRID2; that stretch reads YNRQTIQVSLMLNGWPVISAFAGDQD.

Homohexamer; disulfide-linked homotrimers. The trimers are assembled via the globular C1q domains. The trimers associate via N-terminal cysteine residues to form disulfide-linked hexamers. May form oligomers with CBLN2, CBLN3 and CBLN4 prior to secretion. Once secreted, does not interact with other CBLN family members. Interacts with GRID1. Interacts with NRXN1 and NRXN2 long (alpha) and short (beta) isoforms produced by alternative promoter usage. Competes with NLGN1 for NRXN1-binding. Weakly interacts with NRXN3 short isoform and not at all with NRXN3 long isoform. Interacts (via C1q domain) with GRID2; GRID2-binding is calcium-independent; CBLN1 hexamers anchor GRID2 N-terminal domain dimers to monomeric NRXN1 isoform beta; promotes synaptogenesis and mediates the D-Serine-dependent long term depression signals and AMPA receptor endocytosis. Post-translationally, the proteolytic processing to yield cerebellin seems to occur either prior to the secretion by presynaptic neurons and subsequent oligomerization or in some other location after release of the mature protein. Sialoglycoprotein.

It localises to the secreted. It is found in the postsynaptic cell membrane. Its function is as follows. Required for synapse integrity and synaptic plasticity. During cerebellar synapse formation, essential for the matching and maintenance of pre- and post-synaptic elements at parallel fiber-Purkinje cell synapses, the establishment of the proper pattern of climbing fiber-Purkinje cell innervation, and induction of long-term depression at parallel fiber-Purkinje cell synapses. Plays a role as a synaptic organizer that acts bidirectionally on both pre- and post-synaptic components. On the one hand induces accumulation of synaptic vesicles in the pre-synaptic part by binding with NRXN1 and in other hand induces clustering of GRID2 and its associated proteins at the post-synaptic site through association of GRID2. NRXN1-CBLN1-GRID2 complex directly induces parallel fiber protrusions that encapsulate spines of Purkinje cells leading to accumulation of GRID2 and synaptic vesicles. Required for CBLN3 export from the endoplasmic reticulum and secretion. NRXN1-CBLN1-GRID2 complex mediates the D-Serine-dependent long term depression signals and AMPA receptor endocytosis. Essential for long-term maintenance but not establishment of excitatory synapses. Inhibits the formation and function of inhibitory GABAergic synapses in cerebellar Purkinje cells. The cerebellin peptide exerts neuromodulatory functions. Directly stimulates norepinephrine release via the adenylate cyclase/PKA-dependent signaling pathway; and indirectly enhances adrenocortical secretion in vivo, through a paracrine mechanism involving medullary catecholamine release. The polypeptide is Cerebellin-1 (Bos taurus (Bovine)).